A 171-amino-acid polypeptide reads, in one-letter code: uncharacterized protein (171 aa).

Belongs to the IUNH family.

This is an uncharacterized protein from Acidianus ambivalens (Desulfurolobus ambivalens).